A 585-amino-acid chain; its full sequence is MQKLQENDLSTSQTFKRLWPTIAPFKIGLIAAAAALVLNALTDSGLIYLLKPLLDDGFGKADTSFLKLMAVLVIVFIFIRGITSFISSYCLAWVSGKVVMTMRRRLFKHLMYMPVSFFDQNSTGRLLSRITYDSEQVANSSSNALVTIVREGAYIISLLAVMIATSWQLSVVLFIIGPVIAVLIRLVSKIFRRLSKNMQNSMGELTATAEQMLKGHKVVLSFGGQQIEEQRFNEVSNDMRRKGMKMVVADAISDPIVQIIASLALSAVLYLATIPSIMSQNLSAGSFTVVFSSMLAMLRPLKSLTNVNSQFQRGMAACQTLFDILDLDTEKDKGKYEAERVKGDVSFKDVSFTYQGKDQPALKHLSFDIPHGKTFALVGRSGSGKSTIANLVTRFYDINQGEILLDGVNVQDYTLSNLRTHCSVVSQQVHLFNDTIANNIAYAAKDKYSREQIIAAAKAAHAMEFIEPLENGLDTVIGENGASLSGGQRQRLAIARALLRDSPVLILDEATSALDTESERAIQAALEELQKDRTVLVIAHRLSTIEKADEILVIDHGEICERGSHEELLALNGAYKQLHKMQFNG.

A run of 6 helical transmembrane segments spans residues leucine 18–leucine 38, leucine 68–serine 88, serine 142–methionine 162, isoleucine 163–leucine 183, proline 255–proline 275, and isoleucine 277–methionine 297. Positions isoleucine 30–arginine 313 constitute an ABC transmembrane type-1 domain. The ABC transporter domain occupies valine 345 to methionine 581. Glycine 379–serine 386 provides a ligand contact to ATP.

This sequence belongs to the ABC transporter superfamily. Lipid exporter (TC 3.A.1.106) family. As to quaternary structure, homodimer.

The protein resides in the cell inner membrane. It catalyses the reaction ATP + H2O + lipid A-core oligosaccharideSide 1 = ADP + phosphate + lipid A-core oligosaccharideSide 2.. Its function is as follows. Involved in lipopolysaccharide (LPS) biosynthesis. Translocates lipid A-core from the inner to the outer leaflet of the inner membrane. Transmembrane domains (TMD) form a pore in the inner membrane and the ATP-binding domain (NBD) is responsible for energy generation. The protein is ATP-dependent lipid A-core flippase of Mannheimia succiniciproducens (strain KCTC 0769BP / MBEL55E).